We begin with the raw amino-acid sequence, 247 residues long: Flagellar brake protein YcgR 2 (247 aa).

A PilZ domain is found at 124–237; it reads QRREYFRVET…DETRIQRYIA (114 aa).

Belongs to the YcgR family. Monomer. Interacts with the flagellar basal bodies.

The protein localises to the bacterial flagellum basal body. Its function is as follows. Acts as a flagellar brake, regulating swimming and swarming in a bis-(3'-5') cyclic diguanylic acid (c-di-GMP)-dependent manner. Binds 1 c-di-GMP dimer per subunit. Increasing levels of c-di-GMP lead to decreased motility. The polypeptide is Flagellar brake protein YcgR 2 (Dechloromonas aromatica (strain RCB)).